A 257-amino-acid chain; its full sequence is Large ribosomal subunit protein uL2 (257 aa).

A disordered region spans residues 207 to 257 (VDHPHGGGNHQHVGHPTTLKRSSPPGQKAGKVAARRTGLIRGGNKEGAADN).

It belongs to the universal ribosomal protein uL2 family. Component of the large ribosomal subunit.

Its subcellular location is the cytoplasm. In terms of biological role, component of the large ribosomal subunit. The ribosome is a large ribonucleoprotein complex responsible for the synthesis of proteins in the cell. The chain is Large ribosomal subunit protein uL2 (RPL8) from Entamoeba histolytica (strain ATCC 30459 / HM-1:IMSS / ABRM).